The following is a 314-amino-acid chain: Olfactory receptor 5D14 (314 aa).

The Extracellular portion of the chain corresponds to 1–27 (MMMVLRNLSMEPTFALLGFTDYPKLQI). A glycan (N-linked (GlcNAc...) asparagine) is linked at N7. The helical transmembrane segment at 28 to 48 (PLFLVFLLMYVITVVGNLGMI) threads the bilayer. At 49-56 (IIIKINPK) the chain is on the cytoplasmic side. The chain crosses the membrane as a helical span at residues 57–77 (FHTPMYFFLSHLSFVDFCYSS). Over 78-101 (IVTPKLLENLVMADKSIFYFSCMM) the chain is Extracellular. The chain crosses the membrane as a helical span at residues 102–122 (QYFLSCTAVVTESFLLAVMAY). Over 123–141 (DRFVAICNPLLYTVAMSQR) the chain is Cytoplasmic. The chain crosses the membrane as a helical span at residues 142 to 162 (LCALLVAGSYLWGMFGPLVLL). Residues 163 to 198 (CYALRLNFSGPNVINHFFCEYTALISVSGSDILIPH) are Extracellular-facing. A glycan (N-linked (GlcNAc...) asparagine) is linked at N169. The helical transmembrane segment at 199–219 (LLLFSFATFNEMCTLLIILTS) threads the bilayer. At 220 to 239 (YVFIFVTVLKIRSVSGRHKA) the chain is on the cytoplasmic side. A helical transmembrane segment spans residues 240–260 (FSTWASHLTSITIFHGTILFL). Topologically, residues 261–273 (YCVPNSKNSRQTV) are extracellular. A helical transmembrane segment spans residues 274-294 (KVASVFYTVVNPMLNPLIYSL). Over 295 to 314 (RNKDVKDAFWKLIHTQVPFH) the chain is Cytoplasmic.

It belongs to the G-protein coupled receptor 1 family.

It localises to the cell membrane. Odorant receptor. The protein is Olfactory receptor 5D14 (OR5D14) of Homo sapiens (Human).